Consider the following 146-residue polypeptide: Hemoglobin subunit beta-1 (146 aa).

Ser1 carries the post-translational modification N-acetylserine. Residues 2-146 (FLSAEEKGLV…VASALAHRYH (145 aa)) enclose the Globin domain. Lys17 carries the post-translational modification N6-succinyllysine. Phosphoserine occurs at positions 44 and 50. Lys59 is modified (N6-succinyllysine). Heme b contacts are provided by His63 and His92. Arg104 bears the Asymmetric dimethylarginine mark.

It belongs to the globin family. In terms of assembly, heterotetramer of two alpha chains and two beta chains. As to expression, red blood cells.

Involved in oxygen transport from the lung to the various peripheral tissues. The protein is Hemoglobin subunit beta-1 (HBB1) of Panthera leo (Lion).